A 425-amino-acid chain; its full sequence is Enolase (425 aa).

Glutamine 162 lines the (2R)-2-phosphoglycerate pocket. Glutamate 204 (proton donor) is an active-site residue. The Mg(2+) site is built by aspartate 241, glutamate 284, and aspartate 311. (2R)-2-phosphoglycerate is bound by residues lysine 336, arginine 365, serine 366, and lysine 387. Lysine 336 acts as the Proton acceptor in catalysis.

The protein belongs to the enolase family. Mg(2+) is required as a cofactor.

Its subcellular location is the cytoplasm. It is found in the secreted. It localises to the cell surface. The catalysed reaction is (2R)-2-phosphoglycerate = phosphoenolpyruvate + H2O. It functions in the pathway carbohydrate degradation; glycolysis; pyruvate from D-glyceraldehyde 3-phosphate: step 4/5. Catalyzes the reversible conversion of 2-phosphoglycerate (2-PG) into phosphoenolpyruvate (PEP). It is essential for the degradation of carbohydrates via glycolysis. In Brucella melitensis biotype 2 (strain ATCC 23457), this protein is Enolase.